Consider the following 218-residue polypeptide: Small ribosomal subunit protein uS3c (218 aa).

Residues 47 to 118 form the KH type-2 domain; sequence VQKHMRVSSG…RLNIAITRVA (72 aa).

This sequence belongs to the universal ribosomal protein uS3 family. As to quaternary structure, part of the 30S ribosomal subunit.

The protein localises to the plastid. It localises to the chloroplast. The sequence is that of Small ribosomal subunit protein uS3c (rps3) from Illicium oligandrum (Star anise).